The primary structure comprises 343 residues: MGSADERRFEVLRAIVADFIATKEPIGSKTLVERHNLGVSSATVRNDMAVLEAEGYITQPHTSSGRVPTEKGYREFVDRLDDVKPLSAAERRAIQNFLESGVDLDDVLRRAVRLLAQLTRQVAIVQYPTLSSSTVRHLEVIALTPARLLMVVITDSGRVDQRIVELGDVIDDHELSRLREMLGQALVGKKLSAASVAVADLAEQLRSPDGLGDAVGRSATVLLESLVEHSEERLLMGGTANLTRNAADFGGSLRSILEALEEQVVVLRLLAAQQEAGKVTVRIGYETAAEQMVGTSMVTTAYGTSDTVYGGMGVLGPTRMDYPGTIASVAAVAMYIGEVLGAR.

Belongs to the HrcA family.

In terms of biological role, negative regulator of class I heat shock genes (grpE-dnaK-dnaJ and groELS operons). Prevents heat-shock induction of these operons. This is Heat-inducible transcription repressor HrcA from Mycobacterium avium (strain 104).